The primary structure comprises 354 residues: Ferrochelatase (354 aa).

Fe cation-binding residues include H214 and E295.

This sequence belongs to the ferrochelatase family.

It localises to the cytoplasm. The enzyme catalyses heme b + 2 H(+) = protoporphyrin IX + Fe(2+). It functions in the pathway porphyrin-containing compound metabolism; protoheme biosynthesis; protoheme from protoporphyrin-IX: step 1/1. Its function is as follows. Catalyzes the ferrous insertion into protoporphyrin IX. The polypeptide is Ferrochelatase (Burkholderia vietnamiensis (strain G4 / LMG 22486) (Burkholderia cepacia (strain R1808))).